A 40-amino-acid chain; its full sequence is Photosystem II reaction center protein J (40 aa).

The chain crosses the membrane as a helical span at residues 8–28 (IPLWIIGTVAGILVIGLVGIF).

Belongs to the PsbJ family. In terms of assembly, PSII is composed of 1 copy each of membrane proteins PsbA, PsbB, PsbC, PsbD, PsbE, PsbF, PsbH, PsbI, PsbJ, PsbK, PsbL, PsbM, PsbT, PsbX, PsbY, PsbZ, Psb30/Ycf12, at least 3 peripheral proteins of the oxygen-evolving complex and a large number of cofactors. It forms dimeric complexes.

The protein resides in the plastid. It localises to the chloroplast thylakoid membrane. Functionally, one of the components of the core complex of photosystem II (PSII). PSII is a light-driven water:plastoquinone oxidoreductase that uses light energy to abstract electrons from H(2)O, generating O(2) and a proton gradient subsequently used for ATP formation. It consists of a core antenna complex that captures photons, and an electron transfer chain that converts photonic excitation into a charge separation. The protein is Photosystem II reaction center protein J of Spinacia oleracea (Spinach).